A 198-amino-acid chain; its full sequence is Probable GTP-binding protein EngB (198 aa).

Residues 22 to 195 form the EngB-type G domain; it reads NRVEVAFVGR…IDNLFLEFAT (174 aa). GTP-binding positions include 30–37, 57–61, 75–78, 142–145, and 174–176; these read GRSNVGKS, GKTRL, DLPG, TKSD, and FSS. S37 and T59 together coordinate Mg(2+).

Belongs to the TRAFAC class TrmE-Era-EngA-EngB-Septin-like GTPase superfamily. EngB GTPase family. The cofactor is Mg(2+).

Necessary for normal cell division and for the maintenance of normal septation. This chain is Probable GTP-binding protein EngB, found in Clostridium beijerinckii (strain ATCC 51743 / NCIMB 8052) (Clostridium acetobutylicum).